A 124-amino-acid polypeptide reads, in one-letter code: Succinate dehydrogenase cytochrome b556 subunit (124 aa).

Topologically, residues 1–29 are cytoplasmic; that stretch reads MTKTKQEIYNKRPTSPHLSIYKLQISSTL. Residues 30-55 form a helical membrane-spanning segment; it reads SILHRMTGVALFFAVSILAWWLILSK. The Periplasmic segment spans residues 56 to 67; sequence YDNNYLQFANCC. A helical membrane pass occupies residues 68 to 88; it reads IIKICLVAVSYAWFYHLCNGI. Residue His83 participates in heme binding. At 89-103 the chain is on the cytoplasmic side; it reads RHLFWDIGYGFSIKA. A helical membrane pass occupies residues 104 to 124; the sequence is VNITGWCVVVCSILLTMLLWV.

This sequence belongs to the cytochrome b560 family. Part of an enzyme complex containing four subunits: a flavoprotein, an iron-sulfur protein, plus two membrane-anchoring proteins, SdhC and SdhD. The complex can form homotrimers. Requires heme as cofactor.

It localises to the cell inner membrane. It participates in carbohydrate metabolism; tricarboxylic acid cycle. Functionally, membrane-anchoring subunit of succinate dehydrogenase (SDH). In Rickettsia felis (strain ATCC VR-1525 / URRWXCal2) (Rickettsia azadi), this protein is Succinate dehydrogenase cytochrome b556 subunit (sdhC).